A 348-amino-acid chain; its full sequence is N6-Methyl-AMP deaminase (348 aa).

The Zn(2+) site is built by H18 and H20. N(6)-methyl-AMP contacts are provided by residues H20, N22, H68, 100-103 (STPR), D142, and G175. H202 serves as a coordination point for Zn(2+). The N(6)-methyl-AMP site is built by E205, D287, and D288. The active-site Proton donor is E205. D287 contacts Zn(2+).

This sequence belongs to the metallo-dependent hydrolases superfamily. Adenosine and AMP deaminases family. In terms of assembly, monomer. Requires Zn(2+) as cofactor.

The enzyme catalyses N(6)-methyl-AMP + H2O + H(+) = IMP + methylamine. In terms of biological role, catalyzes the hydrolysis of the free cytosolic methylated adenosine nucleotide N(6)-methyl-AMP (N6-mAMP) to produce inositol monophosphate (IMP) and methylamine. Is required for the catabolism of cytosolic N6-mAMP, which is derived from the degradation of mRNA containing N6-methylated adenine (m6A). This Danio rerio (Zebrafish) protein is N6-Methyl-AMP deaminase (mapda).